The following is an 883-amino-acid chain: Phosphoenolpyruvate carboxylase (883 aa).

Active-site residues include histidine 141 and lysine 547.

This sequence belongs to the PEPCase type 1 family. Mg(2+) is required as a cofactor.

The enzyme catalyses oxaloacetate + phosphate = phosphoenolpyruvate + hydrogencarbonate. In terms of biological role, forms oxaloacetate, a four-carbon dicarboxylic acid source for the tricarboxylic acid cycle. The sequence is that of Phosphoenolpyruvate carboxylase from Chromohalobacter salexigens (strain ATCC BAA-138 / DSM 3043 / CIP 106854 / NCIMB 13768 / 1H11).